Consider the following 287-residue polypeptide: ATP synthase gamma chain (287 aa).

The protein belongs to the ATPase gamma chain family. In terms of assembly, F-type ATPases have 2 components, CF(1) - the catalytic core - and CF(0) - the membrane proton channel. CF(1) has five subunits: alpha(3), beta(3), gamma(1), delta(1), epsilon(1). CF(0) has three main subunits: a, b and c.

It localises to the cell inner membrane. Functionally, produces ATP from ADP in the presence of a proton gradient across the membrane. The gamma chain is believed to be important in regulating ATPase activity and the flow of protons through the CF(0) complex. The polypeptide is ATP synthase gamma chain (Citrobacter koseri (strain ATCC BAA-895 / CDC 4225-83 / SGSC4696)).